Reading from the N-terminus, the 474-residue chain is Ribosomal protein uS12 methylthiotransferase RimO (474 aa).

Residues 37–147 (NRIGFVSLGC…VLNHVHKYVP (111 aa)) form the MTTase N-terminal domain. The [4Fe-4S] cluster site is built by Cys46, Cys82, Cys111, Cys179, Cys183, and Cys186. Residues 165–402 (LTPKHYAYLK…MEVQAEISAE (238 aa)) enclose the Radical SAM core domain. The region spanning 405–471 (ARLVGRELDI…EHDLWAELVA (67 aa)) is the TRAM domain.

This sequence belongs to the methylthiotransferase family. RimO subfamily. The cofactor is [4Fe-4S] cluster.

Its subcellular location is the cytoplasm. It carries out the reaction L-aspartate(89)-[ribosomal protein uS12]-hydrogen + (sulfur carrier)-SH + AH2 + 2 S-adenosyl-L-methionine = 3-methylsulfanyl-L-aspartate(89)-[ribosomal protein uS12]-hydrogen + (sulfur carrier)-H + 5'-deoxyadenosine + L-methionine + A + S-adenosyl-L-homocysteine + 2 H(+). Catalyzes the methylthiolation of an aspartic acid residue of ribosomal protein uS12. This is Ribosomal protein uS12 methylthiotransferase RimO from Shewanella amazonensis (strain ATCC BAA-1098 / SB2B).